We begin with the raw amino-acid sequence, 28 residues long: AKTIAYDEEARRGLERGLNSLADAVKVT.

This sequence belongs to the chaperonin (HSP60) family. In terms of assembly, forms a cylinder of 14 subunits composed of two heptameric rings stacked back-to-back. Interacts with the co-chaperonin GroES.

It is found in the cytoplasm. The catalysed reaction is ATP + H2O + a folded polypeptide = ADP + phosphate + an unfolded polypeptide.. Together with its co-chaperonin GroES, plays an essential role in assisting protein folding. The GroEL-GroES system forms a nano-cage that allows encapsulation of the non-native substrate proteins and provides a physical environment optimized to promote and accelerate protein folding. This Mycolicibacterium smegmatis (Mycobacterium smegmatis) protein is Chaperonin GroEL.